Consider the following 211-residue polypeptide: Guanylate kinase (211 aa).

A Guanylate kinase-like domain is found at 5–184 (GLLIVFSGPS…AAERVKRIIE (180 aa)). 12 to 19 (GPSGVGKG) is an ATP binding site.

The protein belongs to the guanylate kinase family.

The protein resides in the cytoplasm. The enzyme catalyses GMP + ATP = GDP + ADP. Functionally, essential for recycling GMP and indirectly, cGMP. The polypeptide is Guanylate kinase (Streptococcus pyogenes serotype M3 (strain SSI-1)).